The chain runs to 477 residues: MSPQTETKASVGFKAGVKDYKLTYYTPDYETKDTDILAAFRVTPQPGVPPEEAGAAVAAESSTGTWTTVWTDGLTSLDRYKGRCYHIETVVGEENQYIAYVAYPLDLFEEGSVTNMFTSIVGNVFGFKALRALRLEDLRIPPSYSKTFQGPPHGIQVERDKLNKYGRPLLGCTIKPKLGLSAKNYGRAVYECLRGGLDFTKDDENVNSQPFMRWRDRFLFCAEAIYKAQAETGEIKGHYLNATAGTCEEMIKRAVCARELGVPIVMHDYLTGGFTANTSLAHYCRDNGLLLHIHRAMHAVIDRQKNHGMHFRVLAKALRMSGGDHIHAGTVVGKLEGEREMTLGFVDLLRDDFIEKDRSRGIFFTQDWVSMPGVIPVASGGIHVWHMPALTEIFGDDSVLQFGGGTLGHPWGNAPGAVANRVALEACVQARNEGRDLAREGNEIIREASKWSPELAAACEVWKEIKFEFDPVDKLDK.

Residues 1–2 (MS) constitute a propeptide that is removed on maturation. Position 3 is an N-acetylproline (Pro3). Position 14 is an N6,N6,N6-trimethyllysine (Lys14). Residues Asn123 and Thr173 each contribute to the substrate site. Lys175 acts as the Proton acceptor in catalysis. Residue Lys177 participates in substrate binding. 3 residues coordinate Mg(2+): Lys201, Asp203, and Glu204. Residue Lys201 is modified to N6-carboxylysine. Residue His294 is the Proton acceptor of the active site. The substrate site is built by Arg295, His327, and Ser379.

Belongs to the RuBisCO large chain family. Type I subfamily. As to quaternary structure, heterohexadecamer of 8 large chains and 8 small chains; disulfide-linked. The disulfide link is formed within the large subunit homodimers. Mg(2+) serves as cofactor. In terms of processing, the disulfide bond which can form in the large chain dimeric partners within the hexadecamer appears to be associated with oxidative stress and protein turnover.

It is found in the plastid. The protein localises to the chloroplast. It carries out the reaction 2 (2R)-3-phosphoglycerate + 2 H(+) = D-ribulose 1,5-bisphosphate + CO2 + H2O. The enzyme catalyses D-ribulose 1,5-bisphosphate + O2 = 2-phosphoglycolate + (2R)-3-phosphoglycerate + 2 H(+). In terms of biological role, ruBisCO catalyzes two reactions: the carboxylation of D-ribulose 1,5-bisphosphate, the primary event in carbon dioxide fixation, as well as the oxidative fragmentation of the pentose substrate in the photorespiration process. Both reactions occur simultaneously and in competition at the same active site. The polypeptide is Ribulose bisphosphate carboxylase large chain (Hyophorbe lagenicaulis (Bottle palm)).